The following is a 357-amino-acid chain: Chorismate synthase (357 aa).

Arg-48 provides a ligand contact to NADP(+). FMN-binding positions include Arg-125–Ser-127, Asn-238–Ala-239, Gly-282, Lys-297–Ser-301, and Arg-323.

Belongs to the chorismate synthase family. As to quaternary structure, homotetramer. It depends on FMNH2 as a cofactor.

The catalysed reaction is 5-O-(1-carboxyvinyl)-3-phosphoshikimate = chorismate + phosphate. It participates in metabolic intermediate biosynthesis; chorismate biosynthesis; chorismate from D-erythrose 4-phosphate and phosphoenolpyruvate: step 7/7. Catalyzes the anti-1,4-elimination of the C-3 phosphate and the C-6 proR hydrogen from 5-enolpyruvylshikimate-3-phosphate (EPSP) to yield chorismate, which is the branch point compound that serves as the starting substrate for the three terminal pathways of aromatic amino acid biosynthesis. This reaction introduces a second double bond into the aromatic ring system. This chain is Chorismate synthase, found in Gluconacetobacter diazotrophicus (strain ATCC 49037 / DSM 5601 / CCUG 37298 / CIP 103539 / LMG 7603 / PAl5).